We begin with the raw amino-acid sequence, 64 residues long: Large ribosomal subunit protein uL29 (64 aa).

The protein belongs to the universal ribosomal protein uL29 family.

The chain is Large ribosomal subunit protein uL29 from Thiobacillus denitrificans (strain ATCC 25259 / T1).